Consider the following 253-residue polypeptide: 5'-nucleotidase SurE (253 aa).

Positions 8, 9, 39, and 91 each coordinate a divalent metal cation.

This sequence belongs to the SurE nucleotidase family. Requires a divalent metal cation as cofactor.

It localises to the cytoplasm. It carries out the reaction a ribonucleoside 5'-phosphate + H2O = a ribonucleoside + phosphate. Functionally, nucleotidase that shows phosphatase activity on nucleoside 5'-monophosphates. The chain is 5'-nucleotidase SurE from Albidiferax ferrireducens (strain ATCC BAA-621 / DSM 15236 / T118) (Rhodoferax ferrireducens).